Consider the following 346-residue polypeptide: Methylthioribose-1-phosphate isomerase (346 aa).

Substrate contacts are provided by residues 48–50 (RGA), arginine 91, and glutamine 196. Catalysis depends on aspartate 237, which acts as the Proton donor. Position 247–248 (247–248 (NK)) interacts with substrate.

Belongs to the eIF-2B alpha/beta/delta subunits family. MtnA subfamily.

It carries out the reaction 5-(methylsulfanyl)-alpha-D-ribose 1-phosphate = 5-(methylsulfanyl)-D-ribulose 1-phosphate. The protein operates within amino-acid biosynthesis; L-methionine biosynthesis via salvage pathway; L-methionine from S-methyl-5-thio-alpha-D-ribose 1-phosphate: step 1/6. Its function is as follows. Catalyzes the interconversion of methylthioribose-1-phosphate (MTR-1-P) into methylthioribulose-1-phosphate (MTRu-1-P). This is Methylthioribose-1-phosphate isomerase from Thermosipho africanus (strain TCF52B).